A 109-amino-acid polypeptide reads, in one-letter code: UPF0235 protein MA_4097 (109 aa).

The protein belongs to the UPF0235 family.

In Methanosarcina acetivorans (strain ATCC 35395 / DSM 2834 / JCM 12185 / C2A), this protein is UPF0235 protein MA_4097.